A 153-amino-acid polypeptide reads, in one-letter code: Aspartate carbamoyltransferase regulatory chain (153 aa).

Positions 109, 114, 138, and 141 each coordinate Zn(2+).

The protein belongs to the PyrI family. In terms of assembly, contains catalytic and regulatory chains. The cofactor is Zn(2+).

Involved in allosteric regulation of aspartate carbamoyltransferase. This is Aspartate carbamoyltransferase regulatory chain from Vibrio campbellii (strain ATCC BAA-1116).